Reading from the N-terminus, the 102-residue chain is UPF0213 protein Ent638_3592 (102 aa).

A GIY-YIG domain is found at 4–79 (VCWFLYLVRT…KQLTKRQKER (76 aa)).

Belongs to the UPF0213 family.

The polypeptide is UPF0213 protein Ent638_3592 (Enterobacter sp. (strain 638)).